Here is a 130-residue protein sequence, read N- to C-terminus: Biotin carboxyl carrier protein (130 aa).

The segment at 20–64 (EISESSVPAATPITPTTENTRAASDQKQQSQTPSPAATASAANTM) is disordered. The segment covering 23 to 46 (ESSVPAATPITPTTENTRAASDQK) has biased composition (polar residues). The span at 47–64 (QQSQTPSPAATASAANTM) shows a compositional bias: low complexity. The Biotinyl-binding domain occupies 55 to 130 (AATASAANTM…NAGDNLITIA (76 aa)). N6-biotinyllysine is present on lysine 96.

In Streptococcus mutans serotype c (strain ATCC 700610 / UA159), this protein is Biotin carboxyl carrier protein (bcc).